The primary structure comprises 554 residues: Phenylalanine--tRNA ligase beta subunit (554 aa).

The 76-residue stretch at 276–351 (LTPRYREISI…KNHGYEKFEG (76 aa)) folds into the B5 domain. Mg(2+) is bound by residues Asp329, Asp335, Glu338, and Glu339.

Belongs to the phenylalanyl-tRNA synthetase beta subunit family. Type 2 subfamily. In terms of assembly, tetramer of two alpha and two beta subunits. It depends on Mg(2+) as a cofactor.

The protein localises to the cytoplasm. The enzyme catalyses tRNA(Phe) + L-phenylalanine + ATP = L-phenylalanyl-tRNA(Phe) + AMP + diphosphate + H(+). This Methanococcus vannielii (strain ATCC 35089 / DSM 1224 / JCM 13029 / OCM 148 / SB) protein is Phenylalanine--tRNA ligase beta subunit.